The following is a 773-amino-acid chain: DC-STAMP domain-containing protein 2 (773 aa).

Topologically, residues 1-26 (MPKVMKDVVHPLGGEEPSMARAVVRS) are cytoplasmic. Residues 27 to 47 (VGGFTLGLSLATAYGLLELLV) form a helical membrane-spanning segment. Over 48 to 51 (EGHS) the chain is Extracellular. The chain crosses the membrane as a helical span at residues 52–72 (PWGCLVGTLTLAAFLSLGMGF). Topologically, residues 73–233 (SRQVRATVLL…IPQAYHLCYV (161 aa)) are cytoplasmic. The chain crosses the membrane as a helical span at residues 234-254 (LMPFKLALCGLASLVQVFCVI). Residues 255 to 322 (PKYIQPFLRQ…SMKLHRVREA (68 aa)) lie on the Extracellular side of the membrane. N-linked (GlcNAc...) asparagine glycosylation is found at asparagine 284 and asparagine 296. Residues 323-343 (LALMGFTTPLLLVLLYLQALF) traverse the membrane as a helical segment. The Cytoplasmic portion of the chain corresponds to 344–415 (YRYCYLNWDH…ILETFNLIRH (72 aa)). The chain crosses the membrane as a helical span at residues 416–436 (LLLVLFLVFLDYAVFWVLDLA). Residues 437-499 (RHQLQGEIVA…LRPSEPDSTG (63 aa)) lie on the Extracellular side of the membrane. N-linked (GlcNAc...) asparagine glycosylation is present at asparagine 480. The chain crosses the membrane as a helical span at residues 500–520 (YIVIGVMYGLCFFITLFGSYV). Residues 521 to 773 (SRLRRVICAS…LPDPSHPPPK (253 aa)) are Cytoplasmic-facing. Residues 692–701 (SLSMESTSES) show a composition bias toward low complexity. Residues 692-773 (SLSMESTSES…LPDPSHPPPK (82 aa)) are disordered. Positions 758 to 773 (PLSPPSLPDPSHPPPK) are enriched in pro residues.

Interacts with DCST1.

The protein localises to the cytoplasmic vesicle. It is found in the secretory vesicle. It localises to the acrosome membrane. Its function is as follows. Essential sperm cell-surface protein required for sperm-egg fusion and fertilization. The polypeptide is DC-STAMP domain-containing protein 2 (DCST2) (Homo sapiens (Human)).